The sequence spans 305 residues: MQPADASVIERFLDRFWAEQGVARQTLESYRRDLEGLARWRDGAGGGLLGIDRAALFDYLRWRTRANYSPRSTARLLSTLRAFYGLCLRDGARSDDPTALIDPPHLPRSLPKALTESQIEALLAAPDLDTPAGLRDRAMLELMYAAGLRVSELVNLPAVGVNLRQGVLRVTGKGSKDRLVPLGEESQHWLERYLREARPLLAANKPVAAVDGQVPLFIDVSRQPLSRQQFWALVKRYAAVAGIDPATVSPHGLRHSFATHLLNHGADLRALQMLLGHSSLSTTQIYTLVARQHLQKLHASHHPRG.

The region spanning 3–88 (PADASVIERF…TLRAFYGLCL (86 aa)) is the Core-binding (CB) domain. The Tyr recombinase domain maps to 109-299 (SLPKALTESQ…ARQHLQKLHA (191 aa)). Catalysis depends on residues Arg-149, Lys-173, His-251, Arg-254, and His-277. Tyr-286 serves as the catalytic O-(3'-phospho-DNA)-tyrosine intermediate.

The protein belongs to the 'phage' integrase family. XerD subfamily. Forms a cyclic heterotetrameric complex composed of two molecules of XerC and two molecules of XerD.

The protein resides in the cytoplasm. Its function is as follows. Site-specific tyrosine recombinase, which acts by catalyzing the cutting and rejoining of the recombining DNA molecules. The XerC-XerD complex is essential to convert dimers of the bacterial chromosome into monomers to permit their segregation at cell division. It also contributes to the segregational stability of plasmids. The chain is Tyrosine recombinase XerD from Xanthomonas axonopodis pv. citri (strain 306).